A 404-amino-acid polypeptide reads, in one-letter code: Type II restriction enzyme EcoRII (404 aa).

Tyr-308 is an active-site residue.

Homodimer. Mg(2+) serves as cofactor.

It carries out the reaction Endonucleolytic cleavage of DNA to give specific double-stranded fragments with terminal 5'-phosphates.. Functionally, an E and P subtype restriction enzyme that recognizes the double-stranded sequence 5'-CCWGG-3' and cleaves before C-1. The chain is Type II restriction enzyme EcoRII (ecoRIIR) from Escherichia coli.